We begin with the raw amino-acid sequence, 168 residues long: 6,7-dimethyl-8-ribityllumazine synthase (168 aa).

5-amino-6-(D-ribitylamino)uracil is bound by residues Phe24, 58–60, and 82–84; these read ALE and AVI. 87–88 contacts (2S)-2-hydroxy-3-oxobutyl phosphate; sequence ET. Catalysis depends on His90, which acts as the Proton donor. Asn115 is a 5-amino-6-(D-ribitylamino)uracil binding site. Residue Arg129 coordinates (2S)-2-hydroxy-3-oxobutyl phosphate.

It belongs to the DMRL synthase family.

The enzyme catalyses (2S)-2-hydroxy-3-oxobutyl phosphate + 5-amino-6-(D-ribitylamino)uracil = 6,7-dimethyl-8-(1-D-ribityl)lumazine + phosphate + 2 H2O + H(+). It functions in the pathway cofactor biosynthesis; riboflavin biosynthesis; riboflavin from 2-hydroxy-3-oxobutyl phosphate and 5-amino-6-(D-ribitylamino)uracil: step 1/2. Its function is as follows. Catalyzes the formation of 6,7-dimethyl-8-ribityllumazine by condensation of 5-amino-6-(D-ribitylamino)uracil with 3,4-dihydroxy-2-butanone 4-phosphate. This is the penultimate step in the biosynthesis of riboflavin. The polypeptide is 6,7-dimethyl-8-ribityllumazine synthase (Paraburkholderia xenovorans (strain LB400)).